Here is a 282-residue protein sequence, read N- to C-terminus: Pantothenate synthetase (282 aa).

30 to 37 (MGNLHEGH) contacts ATP. Histidine 37 serves as the catalytic Proton donor. A (R)-pantoate-binding site is contributed by glutamine 61. Glutamine 61 contributes to the beta-alanine binding site. An ATP-binding site is contributed by 149 to 152 (GEKD). Residue glutamine 155 participates in (R)-pantoate binding. Residues valine 178 and 186 to 189 (KSSR) contribute to the ATP site.

It belongs to the pantothenate synthetase family. In terms of assembly, homodimer.

It is found in the cytoplasm. The enzyme catalyses (R)-pantoate + beta-alanine + ATP = (R)-pantothenate + AMP + diphosphate + H(+). Its pathway is cofactor biosynthesis; (R)-pantothenate biosynthesis; (R)-pantothenate from (R)-pantoate and beta-alanine: step 1/1. Functionally, catalyzes the condensation of pantoate with beta-alanine in an ATP-dependent reaction via a pantoyl-adenylate intermediate. This chain is Pantothenate synthetase, found in Marinobacter nauticus (strain ATCC 700491 / DSM 11845 / VT8) (Marinobacter aquaeolei).